Reading from the N-terminus, the 180-residue chain is Outer membrane protein YfaZ (180 aa).

Positions 1 to 21 (MKKIALAGLAGMLLVSASVNA) are cleaved as a signal peptide.

Its subcellular location is the cell outer membrane. The chain is Outer membrane protein YfaZ (yfaZ) from Escherichia coli (strain K12).